A 159-amino-acid polypeptide reads, in one-letter code: MKLLSKIMIIALAASMLQACNGPGGMNKQGTGTLLGGAGGALLGSQFGKGKGQLVGVGVGALLGAVLGGQIGAGMDEQDRRLAELTSQRALEATPSGTSVEWRNPDNGNHGYVTPNKTYRNSTGQYCREYTQTVVIGGKQQKAYGNACRQPDGLWQVVN.

The first 19 residues, 1–19 (MKLLSKIMIIALAASMLQA), serve as a signal peptide directing secretion. Cys20 carries the N-palmitoyl cysteine lipid modification. Residue Cys20 is the site of S-diacylglycerol cysteine attachment.

Belongs to the rickettsiale 17 kDa surface antigen family.

It is found in the cell outer membrane. The sequence is that of 17 kDa surface antigen (omp) from Rickettsia felis (strain ATCC VR-1525 / URRWXCal2) (Rickettsia azadi).